Consider the following 136-residue polypeptide: Large ribosomal subunit protein uL16c (136 aa).

It belongs to the universal ribosomal protein uL16 family. Part of the 50S ribosomal subunit.

The protein localises to the plastid. It is found in the chloroplast. This Guizotia abyssinica (Niger) protein is Large ribosomal subunit protein uL16c.